The following is a 210-amino-acid chain: ATP-dependent Clp protease proteolytic subunit (210 aa).

S107 serves as the catalytic Nucleophile. The active site involves H132.

The protein belongs to the peptidase S14 family. As to quaternary structure, fourteen ClpP subunits assemble into 2 heptameric rings which stack back to back to give a disk-like structure with a central cavity, resembling the structure of eukaryotic proteasomes.

It is found in the cytoplasm. It catalyses the reaction Hydrolysis of proteins to small peptides in the presence of ATP and magnesium. alpha-casein is the usual test substrate. In the absence of ATP, only oligopeptides shorter than five residues are hydrolyzed (such as succinyl-Leu-Tyr-|-NHMec, and Leu-Tyr-Leu-|-Tyr-Trp, in which cleavage of the -Tyr-|-Leu- and -Tyr-|-Trp bonds also occurs).. Functionally, cleaves peptides in various proteins in a process that requires ATP hydrolysis. Has a chymotrypsin-like activity. Plays a major role in the degradation of misfolded proteins. This is ATP-dependent Clp protease proteolytic subunit from Azorhizobium caulinodans (strain ATCC 43989 / DSM 5975 / JCM 20966 / LMG 6465 / NBRC 14845 / NCIMB 13405 / ORS 571).